The following is a 473-amino-acid chain: Bifunctional protein HldE (473 aa).

The ribokinase stretch occupies residues 1 to 317 (MTHGLPHFTS…LQQALHPRAI (317 aa)). An ATP-binding site is contributed by 195–198 (NLAE). D264 is a catalytic residue. The interval 343–473 (MTNGCFDILH…SQIIDIIRKN (131 aa)) is cytidylyltransferase.

This sequence in the N-terminal section; belongs to the carbohydrate kinase PfkB family. It in the C-terminal section; belongs to the cytidylyltransferase family. In terms of assembly, homodimer.

The enzyme catalyses D-glycero-beta-D-manno-heptose 7-phosphate + ATP = D-glycero-beta-D-manno-heptose 1,7-bisphosphate + ADP + H(+). It catalyses the reaction D-glycero-beta-D-manno-heptose 1-phosphate + ATP + H(+) = ADP-D-glycero-beta-D-manno-heptose + diphosphate. It participates in nucleotide-sugar biosynthesis; ADP-L-glycero-beta-D-manno-heptose biosynthesis; ADP-L-glycero-beta-D-manno-heptose from D-glycero-beta-D-manno-heptose 7-phosphate: step 1/4. It functions in the pathway nucleotide-sugar biosynthesis; ADP-L-glycero-beta-D-manno-heptose biosynthesis; ADP-L-glycero-beta-D-manno-heptose from D-glycero-beta-D-manno-heptose 7-phosphate: step 3/4. Functionally, catalyzes the phosphorylation of D-glycero-D-manno-heptose 7-phosphate at the C-1 position to selectively form D-glycero-beta-D-manno-heptose-1,7-bisphosphate. Its function is as follows. Catalyzes the ADP transfer from ATP to D-glycero-beta-D-manno-heptose 1-phosphate, yielding ADP-D-glycero-beta-D-manno-heptose. The polypeptide is Bifunctional protein HldE (Nitrosococcus oceani (strain ATCC 19707 / BCRC 17464 / JCM 30415 / NCIMB 11848 / C-107)).